Reading from the N-terminus, the 1040-residue chain is Multidrug resistance protein MdtB (1040 aa).

A run of 12 helical transmembrane segments spans residues 25–45 (LLMA…PVAA), 347–367 (LMLA…NIPA), 369–389 (IIPG…MVFL), 396–416 (LTLM…IVVI), 440–460 (IGFT…PLLF), 472–492 (FAVT…TLTP), 537–557 (WLTL…WIVI), 863–883 (LGST…VLGV), 888–908 (FIHP…ALLA), 910–930 (IIAG…LIGI), 968–988 (ILMT…STGV), and 998–1018 (IAMV…TPVI).

It belongs to the resistance-nodulation-cell division (RND) (TC 2.A.6) family. MdtB subfamily. In terms of assembly, part of a tripartite efflux system composed of MdtA, MdtB and MdtC. MdtB forms a heteromultimer with MdtC.

The protein resides in the cell inner membrane. This is Multidrug resistance protein MdtB from Salmonella newport (strain SL254).